We begin with the raw amino-acid sequence, 235 residues long: Isopentenyl-diphosphate Delta-isomerase I (235 aa).

Residue K38 coordinates substrate. Mg(2+) contacts are provided by H42 and H54. Positions 52-204 constitute a Nudix hydrolase domain; sequence LLHRAFSVFL…GLKLSPWFRL (153 aa). Positions 73 and 77 each coordinate substrate. C89 is an active-site residue. Residue S90 coordinates substrate. 2 residues coordinate Mg(2+): E149 and E151. E151 is an active-site residue.

Belongs to the IPP isomerase type 1 family. Requires Mg(2+) as cofactor.

The catalysed reaction is isopentenyl diphosphate = dimethylallyl diphosphate. Its pathway is isoprenoid biosynthesis; dimethylallyl diphosphate biosynthesis; dimethylallyl diphosphate from isopentenyl diphosphate: step 1/1. It functions in the pathway porphyrin-containing compound metabolism; chlorophyll biosynthesis. In terms of biological role, catalyzes the 1,3-allylic rearrangement of the homoallylic substrate isopentenyl (IPP) to its highly electrophilic allylic isomer, dimethylallyl diphosphate (DMAPP). In Camptotheca acuminata (Happy tree), this protein is Isopentenyl-diphosphate Delta-isomerase I (IPI1).